Consider the following 220-residue polypeptide: Guanylate kinase (220 aa).

In terms of domain architecture, Guanylate kinase-like spans 15-194 (GLMLVISSPS…ALDAVQSIVK (180 aa)). 22–29 (SPSGAGKS) contributes to the ATP binding site.

It belongs to the guanylate kinase family.

The protein resides in the cytoplasm. It carries out the reaction GMP + ATP = GDP + ADP. Functionally, essential for recycling GMP and indirectly, cGMP. This is Guanylate kinase from Rhizobium johnstonii (strain DSM 114642 / LMG 32736 / 3841) (Rhizobium leguminosarum bv. viciae).